Here is a 353-residue protein sequence, read N- to C-terminus: Photosystem II protein D1 (353 aa).

Thr-2 carries the post-translational modification N-acetylthreonine. Thr-2 is subject to Phosphothreonine. The next 3 helical transmembrane spans lie at 29 to 46, 118 to 133, and 142 to 156; these read YIGW…TATS, HFLL…EWEL, and WIAV…AATA. His-118 contacts chlorophyll a. Tyr-126 contacts pheophytin a. [CaMn4O5] cluster is bound by residues Asp-170 and Glu-189. Residues 197 to 218 form a helical membrane-spanning segment; sequence FHMLGVAGVFGGSLFSAMHGSL. His-198 provides a ligand contact to chlorophyll a. A quinone contacts are provided by residues His-215 and 264–265; that span reads SF. His-215 contributes to the Fe cation binding site. His-272 lines the Fe cation pocket. A helical membrane pass occupies residues 274–288; that stretch reads FLAAWPVVGIWFTAL. [CaMn4O5] cluster contacts are provided by His-332, Glu-333, Asp-342, and Ala-344. Positions 345-353 are excised as a propeptide; that stretch reads AVEAPSTNG.

It belongs to the reaction center PufL/M/PsbA/D family. As to quaternary structure, PSII is composed of 1 copy each of membrane proteins PsbA, PsbB, PsbC, PsbD, PsbE, PsbF, PsbH, PsbI, PsbJ, PsbK, PsbL, PsbM, PsbT, PsbX, PsbY, PsbZ, Psb30/Ycf12, at least 3 peripheral proteins of the oxygen-evolving complex and a large number of cofactors. It forms dimeric complexes. It depends on The D1/D2 heterodimer binds P680, chlorophylls that are the primary electron donor of PSII, and subsequent electron acceptors. It shares a non-heme iron and each subunit binds pheophytin, quinone, additional chlorophylls, carotenoids and lipids. D1 provides most of the ligands for the Mn4-Ca-O5 cluster of the oxygen-evolving complex (OEC). There is also a Cl(-1) ion associated with D1 and D2, which is required for oxygen evolution. The PSII complex binds additional chlorophylls, carotenoids and specific lipids. as a cofactor. Tyr-161 forms a radical intermediate that is referred to as redox-active TyrZ, YZ or Y-Z. Post-translationally, C-terminally processed by CTPA; processing is essential to allow assembly of the oxygen-evolving complex and thus photosynthetic growth.

The protein localises to the plastid. It is found in the chloroplast thylakoid membrane. The enzyme catalyses 2 a plastoquinone + 4 hnu + 2 H2O = 2 a plastoquinol + O2. Photosystem II (PSII) is a light-driven water:plastoquinone oxidoreductase that uses light energy to abstract electrons from H(2)O, generating O(2) and a proton gradient subsequently used for ATP formation. It consists of a core antenna complex that captures photons, and an electron transfer chain that converts photonic excitation into a charge separation. The D1/D2 (PsbA/PsbD) reaction center heterodimer binds P680, the primary electron donor of PSII as well as several subsequent electron acceptors. The sequence is that of Photosystem II protein D1 from Lepidium virginicum (Virginia pepperweed).